The sequence spans 210 residues: Proteasome subunit beta (210 aa).

The propeptide at 1 to 10 is removed in mature form; by autocatalysis; that stretch reads MKELDQLTKG. T11 serves as the catalytic Nucleophile.

The protein belongs to the peptidase T1B family. As to quaternary structure, the 20S proteasome core is composed of 14 alpha and 14 beta subunits that assemble into four stacked heptameric rings, resulting in a barrel-shaped structure. The two inner rings, each composed of seven catalytic beta subunits, are sandwiched by two outer rings, each composed of seven alpha subunits. The catalytic chamber with the active sites is on the inside of the barrel. Has a gated structure, the ends of the cylinder being occluded by the N-termini of the alpha-subunits. Is capped at one or both ends by the proteasome regulatory ATPase, PAN.

It is found in the cytoplasm. The enzyme catalyses Cleavage of peptide bonds with very broad specificity.. Its activity is regulated as follows. The formation of the proteasomal ATPase PAN-20S proteasome complex, via the docking of the C-termini of PAN into the intersubunit pockets in the alpha-rings, triggers opening of the gate for substrate entry. Interconversion between the open-gate and close-gate conformations leads to a dynamic regulation of the 20S proteasome proteolysis activity. In terms of biological role, component of the proteasome core, a large protease complex with broad specificity involved in protein degradation. The protein is Proteasome subunit beta of Methanopyrus kandleri (strain AV19 / DSM 6324 / JCM 9639 / NBRC 100938).